Reading from the N-terminus, the 514-residue chain is MQQLNPSEISDIIKKRIEKLDISSEAKNEGTILSVSDGIVLIHGLADVMYGEMIEFANGTYGMALNLERDSVGAVVLGDYEGLAEGQKVRCTGRILEVPVGNELLGRVVDSLGNPIDGKGELGNSLTSPVEKVAPGVIARQSVDEPVQTGLKAIDTMVPIGRGQRELIIGDRQIGKTAVAIDAIINQKHTGIKCIYVAVGQKQSSIAAVVRKLEEHGAMDHTIVVAAGAADPAAMQFLAPYAGTSMGEFFRDRGEDALIVYDDLSKQAVAYRQISLLLRRPPGREAFPGDVFYLHSRLLERASRVNADYVEQFTNGEVKGKTGSLTALPIIETQAGDVSAFVPTNVISITDGQIFLETNLFNSGIRPAMNAGISVSRVGGAAQTKIMKKLGGNIRLALAQYRELAAFAQFASDLDEATRKQLEHGQRVTELMKQNQYSPMTVAEMGTVLFAANEGFLDDVDVNKVVKFEAQLLDWMRSEQKELLDKIGPEGNFNDDITAGLKAALEKFKTTQSW.

170-177 (GDRQIGKT) is an ATP binding site.

Belongs to the ATPase alpha/beta chains family. In terms of assembly, F-type ATPases have 2 components, CF(1) - the catalytic core - and CF(0) - the membrane proton channel. CF(1) has five subunits: alpha(3), beta(3), gamma(1), delta(1), epsilon(1). CF(0) has three main subunits: a(1), b(2) and c(9-12). The alpha and beta chains form an alternating ring which encloses part of the gamma chain. CF(1) is attached to CF(0) by a central stalk formed by the gamma and epsilon chains, while a peripheral stalk is formed by the delta and b chains.

It localises to the cell inner membrane. The catalysed reaction is ATP + H2O + 4 H(+)(in) = ADP + phosphate + 5 H(+)(out). Its function is as follows. Produces ATP from ADP in the presence of a proton gradient across the membrane. The alpha chain is a regulatory subunit. This chain is ATP synthase subunit alpha, found in Marinobacter nauticus (strain ATCC 700491 / DSM 11845 / VT8) (Marinobacter aquaeolei).